Consider the following 326-residue polypeptide: Zona pellucida-binding protein 2 (326 aa).

A signal peptide spans 1 to 20 (MLAWALLSAVLWSLAGVGSA). N-linked (GlcNAc...) asparagine glycans are attached at residues Asn-86, Asn-220, and Asn-256.

This sequence belongs to the zona pellucida-binding protein Sp38 family. Post-translationally, N-glycosylated.

The protein localises to the secreted. It is found in the cytoplasmic vesicle. Its subcellular location is the secretory vesicle. It localises to the acrosome. Functionally, is implicated in sperm-oocyte interaction during fertilization. The sequence is that of Zona pellucida-binding protein 2 (Zpbp2) from Rattus norvegicus (Rat).